Here is a 1648-residue protein sequence, read N- to C-terminus: Kinesin-like protein KIF14 (1648 aa).

The disordered stretch occupies residues 1-27; the sequence is MSLHSTHNRNNSGDILDIPSSQNSSSL. Residues 1 to 356 form a required for PRC1-binding region; sequence MSLHSTHNRN…AGKDPLKVEN (356 aa). 2 positions are modified to phosphoserine: serine 12 and serine 272. At threonine 277 the chain carries Phosphothreonine. Serine 346 bears the Phosphoserine mark. The required for microtubule-binding with high affinity stretch occupies residues 356–737; sequence NSQVTVAVRV…AAQRNSRNID (382 aa). Residues 358 to 701 enclose the Kinesin motor domain; it reads QVTVAVRVRP…LRYANQARLI (344 aa). 447-454 is an ATP binding site; the sequence is GQTGSGKS. Positions 705-791 form a coiled coil; that stretch reads AKVNEDMNAK…QETKELQKAG (87 aa). The FHA domain occupies 825 to 891; that stretch reads TTVGKYKPNS…LRHGDRVILG (67 aa). Residues 901 to 1648 form a required for CIT-binding region; it reads PVEVQKGKRP…ECTPSRIQWV (748 aa). Threonine 915 carries the post-translational modification Phosphothreonine. Positions 922-1079 form a coiled coil; the sequence is KDFEFAKNEL…QNRNNRDKTF (158 aa). A phosphoserine mark is found at serine 937 and serine 1292. Coiled coils occupy residues 1332-1348 and 1468-1500; these read TNIA…VKKL and ENIF…VNRA. Residues 1600–1648 form a disordered region; it reads NTKEEHQQSKSSGIDGSKNKGVPKRVYELHGSSPAVSSEECTPSRIQWV. Residues 1633–1648 are compositionally biased toward polar residues; the sequence is PAVSSEECTPSRIQWV.

This sequence belongs to the TRAFAC class myosin-kinesin ATPase superfamily. Kinesin family. In terms of assembly, directly interacts with PRC1 within a complex also containing KIF4A, KIF20A and KIF23; targets to the central spindle. Directly interacts with CIT depending on the activation state of the kinase (stronger interaction with the kinase-dead form); targets to the midbody. Interacts with ARRB2; the interaction is detected in the nucleus upon OR1D2 stimulation. Interacts with AKT1; the interaction is detected in the plasma membrane upon INS stimulation and promotes AKT1 phosphorylation. Interacts with SVIL; at midbody during cytokinesis. Interacts with RADIL (via PDZ domain); recruits RADIL to the microtubule network restricting RADIL from interaction with activated RAP1A.

Its subcellular location is the nucleus. The protein localises to the cytoplasm. It localises to the cytoskeleton. The protein resides in the spindle. It is found in the midbody. Its function is as follows. Microtubule motor protein that binds to microtubules with high affinity through each tubulin heterodimer and has an ATPase activity. Plays a role in many processes like cell division, cytokinesis and also in cell proliferation and apoptosis. During cytokinesis, targets to central spindle and midbody through its interaction with PRC1 and CIT respectively. Regulates cell growth through regulation of cell cycle progression and cytokinesis. During cell cycle progression acts through SCF-dependent proteasomal ubiquitin-dependent protein catabolic process which controls CDKN1B degradation, resulting in positive regulation of cyclins, including CCNE1, CCND1 and CCNB1. During late neurogenesis, regulates the cerebellar, cerebral cortex and olfactory bulb development through regulation of apoptosis, cell proliferation and cell division. Also is required for chromosome congression and alignment during mitotic cell cycle process. Regulates cell spreading, focal adhesion dynamics, and cell migration through its interaction with RADIL resulting in regulation of RAP1A-mediated inside-out integrin activation by tethering RADIL on microtubules. This is Kinesin-like protein KIF14 from Homo sapiens (Human).